The primary structure comprises 122 residues: Large ribosomal subunit protein uL14 (122 aa).

It belongs to the universal ribosomal protein uL14 family. In terms of assembly, part of the 50S ribosomal subunit. Forms a cluster with proteins L3 and L19. In the 70S ribosome, L14 and L19 interact and together make contacts with the 16S rRNA in bridges B5 and B8.

Its function is as follows. Binds to 23S rRNA. Forms part of two intersubunit bridges in the 70S ribosome. The protein is Large ribosomal subunit protein uL14 of Mesorhizobium japonicum (strain LMG 29417 / CECT 9101 / MAFF 303099) (Mesorhizobium loti (strain MAFF 303099)).